We begin with the raw amino-acid sequence, 208 residues long: Thymidylate kinase (208 aa).

10–17 contacts ATP; sequence GPEGSGKT.

It belongs to the thymidylate kinase family.

The enzyme catalyses dTMP + ATP = dTDP + ADP. Phosphorylation of dTMP to form dTDP in both de novo and salvage pathways of dTTP synthesis. The protein is Thymidylate kinase of Bacillus anthracis.